The sequence spans 244 residues: 3-deoxy-manno-octulosonate cytidylyltransferase (244 aa).

Belongs to the KdsB family.

It localises to the cytoplasm. The catalysed reaction is 3-deoxy-alpha-D-manno-oct-2-ulosonate + CTP = CMP-3-deoxy-beta-D-manno-octulosonate + diphosphate. Its pathway is nucleotide-sugar biosynthesis; CMP-3-deoxy-D-manno-octulosonate biosynthesis; CMP-3-deoxy-D-manno-octulosonate from 3-deoxy-D-manno-octulosonate and CTP: step 1/1. The protein operates within bacterial outer membrane biogenesis; lipopolysaccharide biosynthesis. In terms of biological role, activates KDO (a required 8-carbon sugar) for incorporation into bacterial lipopolysaccharide in Gram-negative bacteria. The protein is 3-deoxy-manno-octulosonate cytidylyltransferase of Anaeromyxobacter sp. (strain Fw109-5).